The sequence spans 223 residues: Glucosyl-3-phosphoglycerate phosphatase (223 aa).

Arg10 provides a ligand contact to substrate. The active-site Tele-phosphohistidine intermediate is His11. An Isoglutamyl lysine isopeptide (Lys-Gln) (interchain with Q-Cter in protein Pup) cross-link involves residue Lys47. Arg60 contributes to the substrate binding site. Glu84 (proton donor/acceptor) is an active-site residue. His159 contacts substrate.

The protein belongs to the phosphoglycerate mutase family. In terms of assembly, homodimer. Dimerization of the enzyme is essential for its dephosphorylation activity.

The enzyme catalyses (2R)-2-O-(alpha-D-glucopyranosyl)-3-phospho-glycerate + H2O = (2R)-2-O-(alpha-D-glucopyranosyl)-glycerate + phosphate. It catalyses the reaction 2-O-(alpha-D-mannosyl)-3-phosphoglycerate + H2O = (2R)-2-O-(alpha-D-mannosyl)-glycerate + phosphate. It carries out the reaction (2R)-2-O-[alpha-D-mannopyranosyl-(1-&gt;2)-alpha-D-glucopyranosyl]-3-phospho-glycerate + H2O = (2R)-2-O-[alpha-D-mannopyranosyl-(1-&gt;2)-alpha-D-glucopyranosyl]-glycerate + phosphate. With respect to regulation, progressively inhibited by cobalt ions at concentrations between 10-50 mM and by copper ions at any concentration between 1-50 mM. Functionally, involved in the biosynthesis of mycobacterial methylglucose lipopolysaccharides (MGLPs). Catalyzes the dephosphorylation of glucosyl-3-phosphoglycerate (GPG) to glucosylglycerate (GG). GPG is the preferred substrate, but GpgP also exhibits low dephosphorylation activity on mannosyl-3-phosphoglycerate (MPG) and mannosylglucosyl-3-phosphoglycerate (MGPG) in vitro. Shows only trace of phosphoglycerate mutase (PGM) activity. The sequence is that of Glucosyl-3-phosphoglycerate phosphatase from Mycobacterium tuberculosis (strain ATCC 25618 / H37Rv).